The chain runs to 329 residues: Bifunctional muramidase/DL-endopeptidase CwlT (329 aa).

A signal peptide spans methionine 1–threonine 29. Residues arginine 59–valine 192 are muramidase. Residues methionine 206 to lysine 329 enclose the NlpC/P60 domain. The active-site Nucleophile is the cysteine 237. Histidine 290 serves as the catalytic Proton acceptor. The active site involves asparagine 302.

The protein belongs to the peptidase C40 family.

The protein localises to the secreted. It catalyses the reaction Hydrolysis of (1-&gt;4)-beta-linkages between N-acetylmuramic acid and N-acetyl-D-glucosamine residues in a peptidoglycan and between N-acetyl-D-glucosamine residues in chitodextrins.. Exhibits both muramidase and DL-endopeptidase activities. The N-terminal region acts as a N-acetylmuramidase, which cleaves the bond between N-acetylmuramic acid and N-acetyl-D-glucosamine (MurNAc-GlcNAc) in peptidoglycan. The C-terminal region acts as a DL-endopeptidase that cleaves the bond between D-gamma-glutamate and meso-diaminopimelic acid. Cannot degrade purified B.anthracis peptidoglycan, which differ from those of B.subtilis. CwlT is required for ICEBs1 conjugation: the muramidase activity is essential, whereas the peptidase activity is partially dispensable for transfer of ICEBs1. The polypeptide is Bifunctional muramidase/DL-endopeptidase CwlT (Bacillus subtilis (strain 168)).